The chain runs to 103 residues: Large ribosomal subunit protein bL21 (103 aa).

Residues 83–92 (YRRKKGHRQP) are compositionally biased toward basic residues. The tract at residues 83–103 (YRRKKGHRQPFSRVTVEKIEA) is disordered.

It belongs to the bacterial ribosomal protein bL21 family. In terms of assembly, part of the 50S ribosomal subunit. Contacts protein L20.

In terms of biological role, this protein binds to 23S rRNA in the presence of protein L20. The chain is Large ribosomal subunit protein bL21 from Pelotomaculum thermopropionicum (strain DSM 13744 / JCM 10971 / SI).